A 444-amino-acid polypeptide reads, in one-letter code: MEKLASLYHEHISTLQQRTCEALARNQFDALLIHSGELQHIFLDDRDYPFKVNACFKAWVPVTKVPNCWLWVDGINKPKLWFYSPVDYWHSVEPLPTSYWTKEVEMIHLANAGDINSALSTYVKQNVAYIGCSPQRAKEIGFSERNINPKSVLDYLHFHRSYKTDYELVCMREAQKTAIVGHLAAYEAFQAGMSEFDINISYLMATGHRDTDVPYNNIIAMNENAAVLHYTALQHNAPSDIRSFLIDAGAEYNGYAADITRTYSAKSNNEFASLIKDMDAEQKALISTIKVGTRYTEYHIQMHHRIAKLLKKYGIVKDVSEEVMVEEGLTTPFFPHGIGHPLGLQVHDVAGFMQDDTGTHLAAPDMYPYLRCTRILEPRMVLTIEPGLYFIESLLAPWRESEFSKHFDWNKIGTLKLFGGIRIEDNIVIHENKVENMTRDLQLP.

Mn(2+)-binding residues include Asp-247, Asp-258, His-340, Glu-385, and Glu-424.

The protein belongs to the peptidase M24B family. Bacterial-type prolidase subfamily. Mn(2+) is required as a cofactor.

It catalyses the reaction Xaa-L-Pro dipeptide + H2O = an L-alpha-amino acid + L-proline. In terms of biological role, splits dipeptides with a prolyl residue in the C-terminal position. This is Xaa-Pro dipeptidase from Photorhabdus laumondii subsp. laumondii (strain DSM 15139 / CIP 105565 / TT01) (Photorhabdus luminescens subsp. laumondii).